The chain runs to 544 residues: Chaperonin GroEL (544 aa).

ATP is bound by residues 29–32 (TLGP), 86–90 (DGTTT), glycine 413, 476–478 (NAA), and aspartate 492.

It belongs to the chaperonin (HSP60) family. As to quaternary structure, forms a cylinder of 14 subunits composed of two heptameric rings stacked back-to-back. Interacts with the co-chaperonin GroES.

It is found in the cytoplasm. It carries out the reaction ATP + H2O + a folded polypeptide = ADP + phosphate + an unfolded polypeptide.. Its function is as follows. Together with its co-chaperonin GroES, plays an essential role in assisting protein folding. The GroEL-GroES system forms a nano-cage that allows encapsulation of the non-native substrate proteins and provides a physical environment optimized to promote and accelerate protein folding. The chain is Chaperonin GroEL from Bacillus cereus (strain G9842).